A 396-amino-acid chain; its full sequence is Chalcone synthase (396 aa).

Cys167 is a catalytic residue.

Belongs to the thiolase-like superfamily. Chalcone/stilbene synthases family.

It carries out the reaction (E)-4-coumaroyl-CoA + 3 malonyl-CoA + 3 H(+) = 2',4,4',6'-tetrahydroxychalcone + 3 CO2 + 4 CoA. It functions in the pathway secondary metabolite biosynthesis; flavonoid biosynthesis. Its function is as follows. The primary product of this enzyme is 4,2',4',6'-tetrahydroxychalcone (also termed naringenin-chalcone or chalcone) which can under specific conditions spontaneously isomerize into naringenin. The polypeptide is Chalcone synthase (CHS) (Chrysosplenium americanum (American golden saxifrage)).